A 619-amino-acid chain; its full sequence is MALLQIAEPGQSSAPHQHRIAIGIDLGTTHSLVATVLSGKPKVLNDVQNRRLLPSIVHYGDNTTHYGEEAKPFIIADPKNTIVSVKRFMGRSKADIKFQHPYELVGSENEMPAFETRAGRKTPVEISAEILKQLKARAEDSLQNPVNGAVITVPAYFDEAQRQATRDAAQLAGLNVLRLLNEPTAAAVAYGLDQESNLATDRNYVIYDLGGGTFDVSILRFSQGVFEVLATGGHTALGGDDLDRLIVKWAKKQLNIDVLSDEDYAVFIVAARQAKEQLSTQDSVELKLLEATLTLDRPTFESIIQVALDKTISVCKRVLRDAKLELTDIQNVVLVGGSTRSYAVQKAVREVFAQEPLCTINPDEVVAIGASITANQLIGNSQDGSLLLDVTPLSLGLETMGGLVERLISRNTAIPVARRQEFTTYQDGQTAMLIHVVQGERDLVEHCRSLGRFVLHGIPPMTAGQARIEVTFQVDADGLLTVSAREATSGVQAHIDIKPSYGLSEADTERLLIEGFQHAEEDKNLRHLKETKVEAERELEALEQALKVDADLLDEKQLEALNSAKGSLKAQLEGSDIQAIEQAVQQLKVHSDAFAALRMNRHIDHALKGTKLDDWSKSN.

It belongs to the heat shock protein 70 family.

Chaperone involved in the maturation of iron-sulfur cluster-containing proteins. Has a low intrinsic ATPase activity which is markedly stimulated by HscB. This chain is Chaperone protein HscA homolog, found in Acinetobacter baumannii (strain ATCC 17978 / DSM 105126 / CIP 53.77 / LMG 1025 / NCDC KC755 / 5377).